Here is a 332-residue protein sequence, read N- to C-terminus: Ribosomal RNA small subunit methyltransferase C (332 aa).

This sequence belongs to the methyltransferase superfamily. RsmC family. In terms of assembly, monomer.

The protein localises to the cytoplasm. It catalyses the reaction guanosine(1207) in 16S rRNA + S-adenosyl-L-methionine = N(2)-methylguanosine(1207) in 16S rRNA + S-adenosyl-L-homocysteine + H(+). Functionally, specifically methylates the guanine in position 1207 of 16S rRNA in the 30S particle. This chain is Ribosomal RNA small subunit methyltransferase C, found in Pseudomonas aeruginosa (strain UCBPP-PA14).